The chain runs to 652 residues: MKKQNNGLIKNPFLWLLFIFFLVTGFQYFYSGNNSGGSQQINYTELVQEITDGNVKELTYQPNGSVIEVSGVYKNPKTSKEGTGIQFFTPSVTKVEKFTSTILPADTTVSELQKLATDHKAEVTVKHESSSGIWINLLVSIVPFGILFFFLFSMMGNMGGGNGRNPMSFGRSKAKAANKEDIKVRFSDVAGAEEEKQELVEVVEFLKDPKRFTKLGARIPAGVLLEGPPGTGKTLLAKAVAGEAGVPFFSISGSDFVEMFVGVGASRVRSLFEDAKKAAPAIIFIDEIDAVGRQRGVGLGGGNDEREQTLNQLLIEMDGFEGNEGIIVIAATNRSDVLDPALLRPGRFDRKVLVGRPDVKGREAILKVHAKNKPLAEDVDLKLVAQQTPGFVGADLENVLNEAALVAARRNKSIIDASDIDEAEDRVIAGPSKKDKTVSQKERELVAYHEAGHTIVGLVLSNARVVHKVTIVPRGRAGGYMIALPKEDQMLLSKEDMKEQLAGLMGGRVAEEIIFNVQTTGASNDFEQATQMARAMVTEYGMSEKLGPVQYEGNHAMLGAQSPQKSISEQTAYEIDEEVRSLLNEARNKAAEIIQSNRETHKLIAEALLKYETLDSTQIKALYETGKMPEAVEEESHALSYDEVKSKMNDEK.

The Cytoplasmic segment spans residues 1–11; that stretch reads MKKQNNGLIKN. Residues 12–32 traverse the membrane as a helical segment; sequence PFLWLLFIFFLVTGFQYFYSG. The Extracellular portion of the chain corresponds to 33–131; the sequence is NNSGGSQQIN…EVTVKHESSS (99 aa). Residues 132-152 form a helical membrane-spanning segment; sequence GIWINLLVSIVPFGILFFFLF. The Cytoplasmic portion of the chain corresponds to 153–652; it reads SMMGNMGGGN…EVKSKMNDEK (500 aa). 227–234 contacts ATP; sequence GPPGTGKT. H449 contributes to the Zn(2+) binding site. The active site involves E450. H453 and D525 together coordinate Zn(2+). The interval 628-652 is disordered; that stretch reads MPEAVEEESHALSYDEVKSKMNDEK. Over residues 634 to 652 the composition is skewed to basic and acidic residues; sequence EESHALSYDEVKSKMNDEK.

The protein in the central section; belongs to the AAA ATPase family. It in the C-terminal section; belongs to the peptidase M41 family. Homohexamer. Requires Zn(2+) as cofactor.

It localises to the cell membrane. Its function is as follows. Acts as a processive, ATP-dependent zinc metallopeptidase for both cytoplasmic and membrane proteins. Plays a role in the quality control of integral membrane proteins. This chain is ATP-dependent zinc metalloprotease FtsH, found in Streptococcus pneumoniae (strain ATCC BAA-255 / R6).